The sequence spans 363 residues: NAD(P)H-quinone oxidoreductase subunit 1, chloroplastic (363 aa).

The next 6 membrane-spanning stretches (helical) occupy residues 28–48 (WVFV…LAIV), 98–118 (FSFG…VIPF), 129–149 (IGVF…LMSG), 253–273 (FGLF…FVTV), 300–320 (VFVT…FIFV), and 336–356 (LLNL…LLTT).

It belongs to the complex I subunit 1 family. In terms of assembly, NDH is composed of at least 16 different subunits, 5 of which are encoded in the nucleus.

It localises to the plastid. It is found in the chloroplast thylakoid membrane. It catalyses the reaction a plastoquinone + NADH + (n+1) H(+)(in) = a plastoquinol + NAD(+) + n H(+)(out). The enzyme catalyses a plastoquinone + NADPH + (n+1) H(+)(in) = a plastoquinol + NADP(+) + n H(+)(out). NDH shuttles electrons from NAD(P)H:plastoquinone, via FMN and iron-sulfur (Fe-S) centers, to quinones in the photosynthetic chain and possibly in a chloroplast respiratory chain. The immediate electron acceptor for the enzyme in this species is believed to be plastoquinone. Couples the redox reaction to proton translocation, and thus conserves the redox energy in a proton gradient. The polypeptide is NAD(P)H-quinone oxidoreductase subunit 1, chloroplastic (Phaseolus vulgaris (Kidney bean)).